We begin with the raw amino-acid sequence, 651 residues long: UvrABC system protein C (651 aa).

Residues 21 to 100 (TEPGCYLMRD…IKNQQPHFNV (80 aa)) form the GIY-YIG domain. In terms of domain architecture, UVR spans 210-245 (DELRQLLNQQMERYAERLDFESAARIRDQLQGIDQL).

Belongs to the UvrC family. Interacts with UvrB in an incision complex.

It localises to the cytoplasm. The UvrABC repair system catalyzes the recognition and processing of DNA lesions. UvrC both incises the 5' and 3' sides of the lesion. The N-terminal half is responsible for the 3' incision and the C-terminal half is responsible for the 5' incision. This is UvrABC system protein C from Synechococcus sp. (strain CC9311).